The primary structure comprises 322 residues: MSRSALVENVMAMLEDAGFLVSDRCAIRPKSFDIAARRGEDVLLLKILGNIDAFDAQTGGEMRRLGTYLNATPIVIGLRTRDEELKPGVVYFRHGVPVLSPDTAMDLFVEEVPPLIYAAPGGLYVNIDSEILADVREDRDWSLGRLAKELGVSRRTVSKYEDGMDASVEVAAELEDLFDAPLTSPVSVLDGAEEVRDDEPTPDDPDVAPEDEPIVTVFTRIGFEVHPTDRAPFKSVNESDDEHGQVLAGHSAFTETAEKRARIMSSVGEVTRTRSVYVVDELRRESVEGTALIEKEEMENIEDAIDLRDLIMERGEDREEVA.

The HTH cro/C1-type domain maps to 132–189 (LADVREDRDWSLGRLAKELGVSRRTVSKYEDGMDASVEVAAELEDLFDAPLTSPVSVL). Residues 143-162 (LGRLAKELGVSRRTVSKYED) constitute a DNA-binding region (H-T-H motif).

This chain is Putative HTH-type transcriptional regulatory protein rrnAC2519, found in Haloarcula marismortui (strain ATCC 43049 / DSM 3752 / JCM 8966 / VKM B-1809) (Halobacterium marismortui).